The primary structure comprises 201 residues: Ribonuclease HII (201 aa).

The RNase H type-2 domain maps to 11-201 (LRECGCDEAG…VVDADRPTTE (191 aa)). A divalent metal cation-binding residues include aspartate 17, glutamate 18, and aspartate 109.

Belongs to the RNase HII family. It depends on Mn(2+) as a cofactor. Requires Mg(2+) as cofactor.

It is found in the cytoplasm. It catalyses the reaction Endonucleolytic cleavage to 5'-phosphomonoester.. Functionally, endonuclease that specifically degrades the RNA of RNA-DNA hybrids. The sequence is that of Ribonuclease HII (rnhB) from Porphyromonas gingivalis (strain ATCC BAA-308 / W83).